The chain runs to 256 residues: Undecaprenyl-diphosphatase (256 aa).

7 helical membrane-spanning segments follow: residues 8–28, 41–61, 75–95, 96–116, 175–195, 208–228, and 236–256; these read VLGI…GHLI, FVKS…VVLY, IIAA…LIKG, FLIG…IILI, AEFS…YDLI, ILII…KWFL, and LKIF…FFLF.

It belongs to the UppP family.

Its subcellular location is the cell inner membrane. It catalyses the reaction di-trans,octa-cis-undecaprenyl diphosphate + H2O = di-trans,octa-cis-undecaprenyl phosphate + phosphate + H(+). Its function is as follows. Catalyzes the dephosphorylation of undecaprenyl diphosphate (UPP). Confers resistance to bacitracin. The chain is Undecaprenyl-diphosphatase from Aquifex aeolicus (strain VF5).